Consider the following 222-residue polypeptide: Gamma-glutamyl cyclotransferase gliK (222 aa).

2 helical membrane-spanning segments follow: residues 154–174 and 187–207; these read GWWF…AAII and GHVP…MWAQ.

Belongs to the class-I pyridoxal-phosphate-dependent aminotransferase family.

The protein resides in the membrane. It carries out the reaction an alpha-(gamma-L-glutamyl)-L-amino acid = 5-oxo-L-proline + an L-alpha-amino acid. The protein operates within secondary metabolite biosynthesis. Its function is as follows. Gamma-glutamyl cyclotransferase; part of the gene cluster that mediates the biosynthesis of an unusual class of epipolythiodioxopiperazines (ETPs) lacking the reactive thiol group important for toxicity. Firstly, L-tyrosine is prenylated by tcpD, before undergoing condensation with L-glycine in a reaction catalyzed by the NRPS tcpP leading to the diketopiperazine (DKP) backbone. Afterwards the alpha-carbon of tyrosine is oxidized by the cytochrome P450 tcpC to form a hydroxyl group. However, in contrast other ETP biosynthesis pathways studied so far, tcpC is not able to bishydroxylate the DKP at both alpha-carbon positions, but hydroxylates the alpha-carbon of the tyrosine part and the nitrogen of the glycine part. The next steps involve an alpha,beta-elimination reaction catalyzed by tcpI, a methylation by the methyltransferase tcpN the action of the four enzyme cascade tcpG/K/J/I. Due to a dysfunctional cytochrome P450 monooxygenase tcpC, the pathway leads to the biosynthesis of probable non-toxic metabolites lacking the reactive thiol group. The chain is Gamma-glutamyl cyclotransferase gliK from Claviceps purpurea (strain 20.1) (Ergot fungus).